Consider the following 398-residue polypeptide: Acetate kinase (398 aa).

Asn-10 is a binding site for Mg(2+). ATP is bound at residue Lys-17. Arg-91 provides a ligand contact to substrate. The active-site Proton donor/acceptor is Asp-148. ATP contacts are provided by residues 208–212 (HLGNG), 283–285 (DCR), and 331–335 (GIGEN). Position 385 (Glu-385) interacts with Mg(2+).

Belongs to the acetokinase family. As to quaternary structure, homodimer. Mg(2+) is required as a cofactor. The cofactor is Mn(2+).

The protein localises to the cytoplasm. It catalyses the reaction acetate + ATP = acetyl phosphate + ADP. Its pathway is metabolic intermediate biosynthesis; acetyl-CoA biosynthesis; acetyl-CoA from acetate: step 1/2. Functionally, catalyzes the formation of acetyl phosphate from acetate and ATP. Can also catalyze the reverse reaction. The polypeptide is Acetate kinase (Shewanella pealeana (strain ATCC 700345 / ANG-SQ1)).